A 340-amino-acid chain; its full sequence is Ketol-acid reductoisomerase (NADP(+)) (340 aa).

The region spanning 1–183 is the KARI N-terminal Rossmann domain; that stretch reads MAVTVYYDKD…GAGRTGIIET (183 aa). Residues 26–29, K49, S54, and 84–87 contribute to the NADP(+) site; these read FGSQ and DELQ. The active site involves H109. Residue G135 participates in NADP(+) binding. Residues 184–329 enclose the KARI C-terminal knotted domain; that stretch reads TFKDETETDL…EKLRAMMPWI (146 aa). Mg(2+) is bound by residues D192, E196, E228, and E232. Residue S253 coordinates substrate.

The protein belongs to the ketol-acid reductoisomerase family. Mg(2+) serves as cofactor.

It carries out the reaction (2R)-2,3-dihydroxy-3-methylbutanoate + NADP(+) = (2S)-2-acetolactate + NADPH + H(+). The enzyme catalyses (2R,3R)-2,3-dihydroxy-3-methylpentanoate + NADP(+) = (S)-2-ethyl-2-hydroxy-3-oxobutanoate + NADPH + H(+). Its pathway is amino-acid biosynthesis; L-isoleucine biosynthesis; L-isoleucine from 2-oxobutanoate: step 2/4. It participates in amino-acid biosynthesis; L-valine biosynthesis; L-valine from pyruvate: step 2/4. Functionally, involved in the biosynthesis of branched-chain amino acids (BCAA). Catalyzes an alkyl-migration followed by a ketol-acid reduction of (S)-2-acetolactate (S2AL) to yield (R)-2,3-dihydroxy-isovalerate. In the isomerase reaction, S2AL is rearranged via a Mg-dependent methyl migration to produce 3-hydroxy-3-methyl-2-ketobutyrate (HMKB). In the reductase reaction, this 2-ketoacid undergoes a metal-dependent reduction by NADPH to yield (R)-2,3-dihydroxy-isovalerate. This Campylobacter hominis (strain ATCC BAA-381 / DSM 21671 / CCUG 45161 / LMG 19568 / NCTC 13146 / CH001A) protein is Ketol-acid reductoisomerase (NADP(+)).